The following is a 35-amino-acid chain: Flavodoxin (35 aa).

The Flavodoxin-like domain maps to 4–35 (IGLFYGTZTGKTESVAEIIDEFGDEVVTLDID).

This sequence belongs to the flavodoxin family. FMN serves as cofactor.

In terms of biological role, low-potential electron donor to a number of redox enzymes. This Nostoc sp. (strain MAC) protein is Flavodoxin.